The chain runs to 533 residues: Beta-glucosidase 24 (533 aa).

Positions Met-1 to Ala-26 are cleaved as a signal peptide. Gln-58 is a binding site for a beta-D-glucoside. Asn-64 and Asn-88 each carry an N-linked (GlcNAc...) asparagine glycan. Residues His-161 and Asn-206–Glu-207 each bind a beta-D-glucoside. The active-site Proton donor is the Glu-207. Cys-226 and Cys-239 are joined by a disulfide. Position 355 (Tyr-355) interacts with a beta-D-glucoside. Asn-388 carries an N-linked (GlcNAc...) asparagine glycan. A beta-D-glucoside is bound at residue Glu-427. Glu-427 (nucleophile) is an active-site residue. N-linked (GlcNAc...) asparagine glycosylation is found at Asn-437, Asn-442, and Asn-470. A beta-D-glucoside contacts are provided by residues Trp-477, Glu-484–Trp-485, and Phe-493. Asn-503 carries an N-linked (GlcNAc...) asparagine glycan. A Prevents secretion from ER motif is present at residues Lys-530 to Leu-533.

The protein belongs to the glycosyl hydrolase 1 family.

It localises to the endoplasmic reticulum lumen. It carries out the reaction Hydrolysis of terminal, non-reducing beta-D-glucosyl residues with release of beta-D-glucose.. The chain is Beta-glucosidase 24 from Arabidopsis thaliana (Mouse-ear cress).